The sequence spans 498 residues: Glycerol kinase (498 aa).

Thr-12 contributes to the ADP binding site. Residues Thr-12, Thr-13, and Ser-14 each contribute to the ATP site. Position 12 (Thr-12) interacts with sn-glycerol 3-phosphate. Arg-16 is an ADP binding site. The sn-glycerol 3-phosphate site is built by Arg-82, Glu-83, Tyr-134, and Asp-241. Arg-82, Glu-83, Tyr-134, Asp-241, and Gln-242 together coordinate glycerol. Residues Thr-263 and Gly-310 each coordinate ADP. Thr-263, Gly-310, Gln-314, and Gly-411 together coordinate ATP. ADP contacts are provided by Gly-411 and Asn-415.

This sequence belongs to the FGGY kinase family.

The catalysed reaction is glycerol + ATP = sn-glycerol 3-phosphate + ADP + H(+). It functions in the pathway polyol metabolism; glycerol degradation via glycerol kinase pathway; sn-glycerol 3-phosphate from glycerol: step 1/1. Inhibited by fructose 1,6-bisphosphate (FBP). Functionally, key enzyme in the regulation of glycerol uptake and metabolism. Catalyzes the phosphorylation of glycerol to yield sn-glycerol 3-phosphate. The protein is Glycerol kinase of Janthinobacterium sp. (strain Marseille) (Minibacterium massiliensis).